The primary structure comprises 642 residues: MYPASPSAGPALHPVPHRARLPRPRCLAEPPRSPAPGPGSTARPPPPAPGPRPRVAVKMTFRKAYSIKDKLQAIERVKGGERQASVCRDFGVPGGTLRGWLKDEPKLRWFLDQLGGEVGTQRKKMRLANEEEIDRAVYSWFLTLRQHGVPLSGPVIQAQAEAFARQIYGPECTFKASHGWFWRWQKRHGISSQRIYGEAEPPVAGPAPVKEEPAQPSSAGLLLDGTPATLPHSEGGYGDEQIYNANVTGLYWRLLPEQNATPGTGDSREPGECSRRWCSDRVTVLLAANLTGSHKLKPLVIGQLPDPPSLRHHNQDKFPASYRYSPDAWLSRPLLRGWFFEEFVPGVKRYLRRSCLQQKAVLLVAHPPCPSWTTSMPAVEESEGTPRQCQPELLGSPEELQTPDGAVRVLFLSRGNSRAHIPAPLEHGVVAAFKHLYKRELLRLAVSCASGSPLDFMRSFMLKDMLYLAGLSWDLVQAGSIERCWLLGLRAAFEPGQQPAHQVEEAAEHSRMLSDLTHLAALAYKRLAPEEVAEWLHLDDDGGLPEGCGEEVAPAAPPSPASLPSSIGAGEEEEEEATEQGGVLVPTAGEAVWGLETALRWLESQDPREVGPLRLVQLRSLITMARRLGGIGPSAAASDDGV.

The disordered stretch occupies residues 1-54 (MYPASPSAGPALHPVPHRARLPRPRCLAEPPRSPAPGPGSTARPPPPAPGPRPR). The segment covering 31–52 (PRSPAPGPGSTARPPPPAPGPR) has biased composition (pro residues). The 52-residue stretch at 56–107 (AVKMTFRKAYSIKDKLQAIERVKGGERQASVCRDFGVPGGTLRGWLKDEPKL) folds into the HTH psq-type domain. DNA-binding regions (H-T-H motif) lie at residues 83–103 (QASV…WLKD) and 154–187 (PVIQ…WQKR). The HTH CENPB-type domain maps to 121–194 (QRKKMRLANE…QKRHGISSQR (74 aa)). A compositionally biased stretch (low complexity) spans 198–208 (EAEPPVAGPAP). Residues 198-230 (EAEPPVAGPAPVKEEPAQPSSAGLLLDGTPATL) form a disordered region. A DDE-1 domain is found at 239–364 (DEQIYNANVT…CLQQKAVLLV (126 aa)). Positions 543–583 (GLPEGCGEEVAPAAPPSPASLPSSIGAGEEEEEEATEQGGV) are disordered.

It belongs to the tigger transposable element derived protein family.

It localises to the nucleus. This Rattus norvegicus (Rat) protein is Tigger transposable element derived 5 (Tigd5).